The chain runs to 260 residues: Small ribosomal subunit protein eS4 (260 aa).

Residues 46–111 (VPLLILVRDM…RYRVVMNEHH (66 aa)) form the S4 RNA-binding domain.

This sequence belongs to the eukaryotic ribosomal protein eS4 family.

The polypeptide is Small ribosomal subunit protein eS4 (Methanopyrus kandleri (strain AV19 / DSM 6324 / JCM 9639 / NBRC 100938)).